Consider the following 394-residue polypeptide: Elongation factor Tu (394 aa).

The tr-type G domain occupies 10-204 (KPHVNIGTIG…AVDSYIPQPI (195 aa)). The segment at 19-26 (GHVDHGKT) is G1. Residue 19–26 (GHVDHGKT) coordinates GTP. Thr26 contributes to the Mg(2+) binding site. The segment at 60-64 (GITIS) is G2. Positions 81–84 (DCPG) are G3. GTP contacts are provided by residues 81 to 85 (DCPGH) and 136 to 139 (NKVD). Residues 136–139 (NKVD) are G4. Positions 174 to 176 (SAL) are G5.

This sequence belongs to the TRAFAC class translation factor GTPase superfamily. Classic translation factor GTPase family. EF-Tu/EF-1A subfamily. Monomer.

The protein localises to the cytoplasm. It carries out the reaction GTP + H2O = GDP + phosphate + H(+). Functionally, GTP hydrolase that promotes the GTP-dependent binding of aminoacyl-tRNA to the A-site of ribosomes during protein biosynthesis. This Rickettsia typhi (strain ATCC VR-144 / Wilmington) protein is Elongation factor Tu.